The chain runs to 141 residues: Large ribosomal subunit protein uL16 (141 aa).

Belongs to the universal ribosomal protein uL16 family. As to quaternary structure, part of the 50S ribosomal subunit.

Functionally, binds 23S rRNA and is also seen to make contacts with the A and possibly P site tRNAs. This Aliarcobacter butzleri (strain RM4018) (Arcobacter butzleri) protein is Large ribosomal subunit protein uL16.